We begin with the raw amino-acid sequence, 230 residues long: Ion-translocating oxidoreductase complex subunit E (230 aa).

6 helical membrane passes run 11 to 31 (GMWA…LLAV), 39 to 59 (LGLG…VSLV), 69 to 89 (IPVF…LMNA), 93 to 113 (GLYL…IIIG), 132 to 152 (FWMG…REII), and 182 to 202 (SFLL…LIAL).

Belongs to the NqrDE/RnfAE family. As to quaternary structure, the complex is composed of six subunits: RnfA, RnfB, RnfC, RnfD, RnfE and RnfG.

It is found in the cell inner membrane. Part of a membrane-bound complex that couples electron transfer with translocation of ions across the membrane. This is Ion-translocating oxidoreductase complex subunit E from Vibrio atlanticus (strain LGP32) (Vibrio splendidus (strain Mel32)).